A 455-amino-acid chain; its full sequence is Dihydrolipoyllysine-residue succinyltransferase component of 2-oxoglutarate dehydrogenase complex, mitochondrial (455 aa).

Residues 1–68 constitute a mitochondrion transit peptide; sequence MLSRSRCASR…RFFRTTAVCK (68 aa). A Lipoyl-binding domain is found at 71-145; sequence VITVKTPAFA…EGGTPLFTLR (75 aa). Ser82 carries the post-translational modification Phosphoserine. Lys111 carries the N6-lipoyllysine modification. At Lys155 the chain carries N6-acetyllysine. Low complexity predominate over residues 155–173; sequence KPAAAPAAAAPKAEPTVSA. The disordered stretch occupies residues 155–220; sequence KPAAAPAAAA…PRAEAGAGVG (66 aa). Residues 174 to 193 are compositionally biased toward pro residues; sequence VPPPPAAPIPTQMPPVPSPS. N6-acetyllysine occurs at positions 269, 274, 275, 279, and 309. Residues His426 and Asp430 contribute to the active site.

It belongs to the 2-oxoacid dehydrogenase family. As to quaternary structure, the 2-oxoglutarate dehydrogenase complex is composed of OGDH (2-oxoglutarate dehydrogenase; E1), DLST (dihydrolipoamide succinyltransferase; E2), DLD (dihydrolipoamide dehydrogenase; E3) and the assembly factor KGD4. It contains multiple copies of the three enzymatic components (E1, E2 and E3). In the nucleus, the 2-oxoglutarate dehydrogenase complex associates with KAT2A. Interacts with ABHD11; this interaction maintains the functional lipoylation of the 2-oxoglutarate dehydrogenase complex. (R)-lipoate is required as a cofactor.

It is found in the mitochondrion matrix. It localises to the nucleus. The enzyme catalyses N(6)-[(R)-dihydrolipoyl]-L-lysyl-[protein] + succinyl-CoA = N(6)-[(R)-S(8)-succinyldihydrolipoyl]-L-lysyl-[protein] + CoA. The protein operates within amino-acid degradation; L-lysine degradation via saccharopine pathway; glutaryl-CoA from L-lysine: step 6/6. It functions in the pathway carbohydrate metabolism; tricarboxylic acid cycle. Functionally, dihydrolipoamide succinyltransferase (E2) component of the 2-oxoglutarate dehydrogenase complex. The 2-oxoglutarate dehydrogenase complex catalyzes the overall conversion of 2-oxoglutarate to succinyl-CoA and CO(2). The 2-oxoglutarate dehydrogenase complex is mainly active in the mitochondrion. A fraction of the 2-oxoglutarate dehydrogenase complex also localizes in the nucleus and is required for lysine succinylation of histones: associates with KAT2A on chromatin and provides succinyl-CoA to histone succinyltransferase KAT2A. The protein is Dihydrolipoyllysine-residue succinyltransferase component of 2-oxoglutarate dehydrogenase complex, mitochondrial of Bos taurus (Bovine).